The following is a 59-amino-acid chain: Large ribosomal subunit protein bL32 (59 aa).

The segment at 1–21 (MAVPKKKSSKSKGRSRAAHHA) is disordered.

Belongs to the bacterial ribosomal protein bL32 family.

The chain is Large ribosomal subunit protein bL32 from Magnetococcus marinus (strain ATCC BAA-1437 / JCM 17883 / MC-1).